We begin with the raw amino-acid sequence, 338 residues long: CRISPR system Cmr subunit Cmr1-1 (338 aa).

It belongs to the CRISPR system Cmr1 family. In terms of assembly, part of the type III-B Cmr ribonucleoprotein (RNP) complex, an elongated RNP with Cmr2 and Cmr3 as the base, with Cmr4 and Cmr5 forming a helical core along the mature crRNA (39 or 45 nt in length), while the complex is capped by Cmr6 and Cmr1. The 5' end of the crRNA is bound to Cmr2 and Cmr3, while Cmr6 and a Cmr1 subunit (Cmr1-1 or Cmr1-2) cap the 3' end of the crRNA. The target RNA lies antiparallel to the crRNA, with its 5' end near Cmr1 and Cmr6 and its 3' end near Cmr2 and Cmr3; major target cleavage occurs nears the junction of Cmr1/Cmr6 and Cmr4/Cmr, with minor cleavage occurring at 6 nt intervals which coincide with the proposed spacing of Cmr4 subunits.

Its subcellular location is the cytoplasm. CRISPR (clustered regularly interspaced short palindromic repeat), is an adaptive immune system that provides protection against mobile genetic elements (viruses, transposable elements and conjugative plasmids). CRISPR clusters contain sequences complementary to antecedent mobile elements and target invading nucleic acids. CRISPR clusters are transcribed and processed into CRISPR RNA (crRNA), formerly called psiRNA (prokaryotic silencing) in this organism. Part of the Cmr ribonucleoprotein complex which has divalent cation-dependent endoribonuclease activity specific for ssRNA complementary to the crRNA (target RNA), generating 5' hydroxy- and 3' phosphate or 2'-3' cyclic phosphate termini. Cmr4 is probably the subunit that cleaves target RNA. Cmr complex does not cleave ssDNA complementary to the crRNA. Cleavage of invading RNA is guided by the crRNA; substrate cleavage occurs a fixed distance (14 nt) from the 3' end of the crRNA. In vitro reconstitution shows Cmr1-2 and Cmr5 are not absolutely necessary for target cleavage. In Pyrococcus furiosus (strain ATCC 43587 / DSM 3638 / JCM 8422 / Vc1), this protein is CRISPR system Cmr subunit Cmr1-1.